Consider the following 577-residue polypeptide: Thiol:disulfide interchange protein DsbD (577 aa).

The first 23 residues, 1–23 (MAQRIFTLIFLLWTAVGTPQVAA), serve as a signal peptide directing secretion. Intrachain disulfides connect Cys131–Cys137 and Cys194–Cys316. Helical transmembrane passes span 182–202 (ALLIGIGVAFTPCVLPMYPLI), 225–245 (YVQGMALTYTLLGLIVAAAGL), 255–275 (YILIGLSVMFIALALSMFGLY), 308–328 (LAGLICSPCTTAPLSAILLYI), 338–358 (GGTLYLYALGMGLPLILVTLF), 369–389 (WMQYVKEAFGFIILALPVFLL), and 396–416 (AWGIRLWSALGIAFFGWALML). The region spanning 437–577 (VISAKPLQDW…FQAHLQKFSP (141 aa)) is the Thioredoxin domain. An intrachain disulfide couples Cys492 to Cys495.

The protein belongs to the thioredoxin family. DsbD subfamily.

It localises to the cell inner membrane. The enzyme catalyses [protein]-dithiol + NAD(+) = [protein]-disulfide + NADH + H(+). The catalysed reaction is [protein]-dithiol + NADP(+) = [protein]-disulfide + NADPH + H(+). In terms of biological role, required to facilitate the formation of correct disulfide bonds in some periplasmic proteins and for the assembly of the periplasmic c-type cytochromes. Acts by transferring electrons from cytoplasmic thioredoxin to the periplasm. This transfer involves a cascade of disulfide bond formation and reduction steps. This Pectobacterium atrosepticum (strain SCRI 1043 / ATCC BAA-672) (Erwinia carotovora subsp. atroseptica) protein is Thiol:disulfide interchange protein DsbD.